The primary structure comprises 129 residues: Glycine cleavage system H protein (129 aa).

One can recognise a Lipoyl-binding domain in the interval 23-104 (TATIGITQHA…AYAAWLFRLK (82 aa)). The residue at position 64 (lysine 64) is an N6-lipoyllysine.

Belongs to the GcvH family. As to quaternary structure, the glycine cleavage system is composed of four proteins: P, T, L and H. Requires (R)-lipoate as cofactor.

In terms of biological role, the glycine cleavage system catalyzes the degradation of glycine. The H protein shuttles the methylamine group of glycine from the P protein to the T protein. The sequence is that of Glycine cleavage system H protein from Nitrosospira multiformis (strain ATCC 25196 / NCIMB 11849 / C 71).